The chain runs to 337 residues: uncharacterized protein (337 aa).

A compositionally biased stretch (low complexity) spans 42-66; the sequence is SHSVSPSPSPSDFSSSSSSSSSSPS. The interval 42–68 is disordered; that stretch reads SHSVSPSPSPSDFSSSSSSSSSSPSTF. The Exonuclease domain maps to 129–304; that stretch reads FLVIDLEGKV…DDTKNITRVV (176 aa). Asp133, Glu135, and Asp234 together coordinate Mg(2+). Glu135 serves as the catalytic Proton acceptor. Glu135 is an AMP binding site. Catalysis depends on His291, which acts as the Proton acceptor. His291 contacts AMP. Asp296 provides a ligand contact to Mg(2+).

This is an uncharacterized protein from Arabidopsis thaliana (Mouse-ear cress).